We begin with the raw amino-acid sequence, 286 residues long: Bifunctional protein FolD (286 aa).

NADP(+) is bound by residues 164 to 166 and isoleucine 230; that span reads GTS.

This sequence belongs to the tetrahydrofolate dehydrogenase/cyclohydrolase family. Homodimer.

It catalyses the reaction (6R)-5,10-methylene-5,6,7,8-tetrahydrofolate + NADP(+) = (6R)-5,10-methenyltetrahydrofolate + NADPH. The catalysed reaction is (6R)-5,10-methenyltetrahydrofolate + H2O = (6R)-10-formyltetrahydrofolate + H(+). The protein operates within one-carbon metabolism; tetrahydrofolate interconversion. Its function is as follows. Catalyzes the oxidation of 5,10-methylenetetrahydrofolate to 5,10-methenyltetrahydrofolate and then the hydrolysis of 5,10-methenyltetrahydrofolate to 10-formyltetrahydrofolate. In Mesoplasma florum (strain ATCC 33453 / NBRC 100688 / NCTC 11704 / L1) (Acholeplasma florum), this protein is Bifunctional protein FolD.